A 652-amino-acid polypeptide reads, in one-letter code: DNA ligase (652 aa).

NAD(+) contacts are provided by residues 29 to 33 (DSDYD), 78 to 79 (SL), and Glu107. The active-site N6-AMP-lysine intermediate is Lys109. The NAD(+) site is built by Arg130, Glu164, Lys278, and Lys302. Zn(2+) is bound by residues Cys395, Cys398, Cys413, and Cys418. A BRCT domain is found at 577-652 (NSDAALFGLT…IEDEDWLRQL (76 aa)).

Belongs to the NAD-dependent DNA ligase family. LigA subfamily. Mg(2+) is required as a cofactor. The cofactor is Mn(2+).

It catalyses the reaction NAD(+) + (deoxyribonucleotide)n-3'-hydroxyl + 5'-phospho-(deoxyribonucleotide)m = (deoxyribonucleotide)n+m + AMP + beta-nicotinamide D-nucleotide.. Its function is as follows. DNA ligase that catalyzes the formation of phosphodiester linkages between 5'-phosphoryl and 3'-hydroxyl groups in double-stranded DNA using NAD as a coenzyme and as the energy source for the reaction. It is essential for DNA replication and repair of damaged DNA. This is DNA ligase from Streptococcus pyogenes serotype M49 (strain NZ131).